Consider the following 470-residue polypeptide: GTPase Der (470 aa).

2 EngA-type G domains span residues 32-195 and 206-379; these read PVVA…PTIS and RRVA…KSWD. GTP contacts are provided by residues 38-45, 85-89, 147-150, 212-219, 259-263, and 324-327; these read GRPNVGKS, DTGGW, NKVD, GKPNVGKS, DTAGL, and NKWD. The KH-like domain occupies 380 to 462; that stretch reads TRVSTGRLNT…PIRINVRVRE (83 aa).

The protein belongs to the TRAFAC class TrmE-Era-EngA-EngB-Septin-like GTPase superfamily. EngA (Der) GTPase family. In terms of assembly, associates with the 50S ribosomal subunit.

In terms of biological role, GTPase that plays an essential role in the late steps of ribosome biogenesis. In Mycolicibacterium vanbaalenii (strain DSM 7251 / JCM 13017 / BCRC 16820 / KCTC 9966 / NRRL B-24157 / PYR-1) (Mycobacterium vanbaalenii), this protein is GTPase Der.